The chain runs to 201 residues: Protein GrpE (201 aa).

The disordered stretch occupies residues 1-32 (MTDRDRQPEDTTAPTGEPVVSKPYIMPDDPEP).

It belongs to the GrpE family. In terms of assembly, homodimer.

Its subcellular location is the cytoplasm. In terms of biological role, participates actively in the response to hyperosmotic and heat shock by preventing the aggregation of stress-denatured proteins, in association with DnaK and GrpE. It is the nucleotide exchange factor for DnaK and may function as a thermosensor. Unfolded proteins bind initially to DnaJ; upon interaction with the DnaJ-bound protein, DnaK hydrolyzes its bound ATP, resulting in the formation of a stable complex. GrpE releases ADP from DnaK; ATP binding to DnaK triggers the release of the substrate protein, thus completing the reaction cycle. Several rounds of ATP-dependent interactions between DnaJ, DnaK and GrpE are required for fully efficient folding. This is Protein GrpE from Bradyrhizobium diazoefficiens (strain JCM 10833 / BCRC 13528 / IAM 13628 / NBRC 14792 / USDA 110).